Here is a 311-residue protein sequence, read N- to C-terminus: Salutaridine reductase (311 aa).

Residue 17-40 coordinates NADP(+); that stretch reads VTGGNKGIGFEICKQLSSSGIMVV. Position 180 (Ser180) interacts with substrate. Residue Tyr236 is the Proton acceptor of the active site.

The protein belongs to the short-chain dehydrogenases/reductases (SDR) family.

The catalysed reaction is (7S)-salutaridinol + NADP(+) = salutaridine + NADPH + H(+). Its activity is regulated as follows. Subject to substrate inhibition at salutaridine concentrations higher than 20 to 30 uM. In terms of biological role, involved in biosynthesis of morphinan-type benzylisoquinoline alkaloids. Catalyzes the stereospecific conversion of salutaridine to salutaridinol. This is Salutaridine reductase from Papaver bracteatum (Great scarlet poppy).